The primary structure comprises 32 residues: 24 kDa flagellin (32 aa).

This sequence belongs to the archaeal flagellin family. Glycosylated.

It is found in the archaeal flagellum. Functionally, flagellin is the subunit protein which polymerizes to form the filaments of archaeal flagella. This is 24 kDa flagellin from Methanospirillum hungatei.